The chain runs to 570 residues: Glycine--tRNA ligase (570 aa).

Residues R95 and E159 each contribute to the substrate site. ATP-binding positions include 191-193 (RNE), 201-206 (IRLREF), 312-313 (EV), and 426-429 (GLDR). Substrate is bound at residue 206-210 (FNQAE). 422–426 (EPSFG) is a substrate binding site.

This sequence belongs to the class-II aminoacyl-tRNA synthetase family.

It is found in the cytoplasm. The enzyme catalyses tRNA(Gly) + glycine + ATP = glycyl-tRNA(Gly) + AMP + diphosphate. Its function is as follows. Catalyzes the attachment of glycine to tRNA(Gly). This chain is Glycine--tRNA ligase, found in Archaeoglobus fulgidus (strain ATCC 49558 / DSM 4304 / JCM 9628 / NBRC 100126 / VC-16).